Consider the following 204-residue polypeptide: Inner membrane-spanning protein YciB (204 aa).

Helical transmembrane passes span 48–68, 73–93, 102–122, 147–167, and 170–190; these read ILFA…LYFF, FESM…ATLM, WKPT…QLFT, GAWI…AYAF, and AVWV…FVVG.

It belongs to the YciB family.

The protein localises to the cell inner membrane. Plays a role in cell envelope biogenesis, maintenance of cell envelope integrity and membrane homeostasis. The chain is Inner membrane-spanning protein YciB from Nitrosococcus oceani (strain ATCC 19707 / BCRC 17464 / JCM 30415 / NCIMB 11848 / C-107).